Reading from the N-terminus, the 218-residue chain is Thymidylate kinase (218 aa).

15–22 (GLDRSGKS) is an ATP binding site.

This sequence belongs to the thymidylate kinase family.

It carries out the reaction dTMP + ATP = dTDP + ADP. It functions in the pathway pyrimidine metabolism; dTTP biosynthesis. Catalyzes the conversion of dTMP to dTDP. In Caenorhabditis elegans, this protein is Thymidylate kinase.